The sequence spans 101 residues: Co-chaperonin GroES 1 (101 aa).

Belongs to the GroES chaperonin family. Heptamer of 7 subunits arranged in a ring. Interacts with the chaperonin GroEL.

The protein resides in the cytoplasm. Together with the chaperonin GroEL, plays an essential role in assisting protein folding. The GroEL-GroES system forms a nano-cage that allows encapsulation of the non-native substrate proteins and provides a physical environment optimized to promote and accelerate protein folding. GroES binds to the apical surface of the GroEL ring, thereby capping the opening of the GroEL channel. This Rhodopirellula baltica (strain DSM 10527 / NCIMB 13988 / SH1) protein is Co-chaperonin GroES 1.